The sequence spans 665 residues: Cinnamate reductase (665 aa).

Gln-109 contributes to the FMN binding site. Tyr-182 serves as the catalytic Proton donor. FMN is bound by residues Arg-230, Arg-319, and 341 to 342 (GR). Residues Cys-365, Cys-368, Cys-372, and Cys-384 each coordinate [4Fe-4S] cluster. The FAD site is built by Ala-415, Glu-434, Asn-442, Lys-452, and Ala-479.

In the N-terminal section; belongs to the NADH:flavin oxidoreductase/NADH oxidase family. FMN serves as cofactor. It depends on FAD as a cofactor. [4Fe-4S] cluster is required as a cofactor.

The enzyme catalyses 3-phenylpropanoate + NAD(+) = (E)-cinnamate + NADH + H(+). The protein operates within amino-acid degradation; L-phenylalanine degradation. Its function is as follows. Involved in the fermentation of L-phenylalanine via a Stickland reaction. Catalyzes the reduction of (E)-cinnamate to yield 3-phenylpropionate. This chain is Cinnamate reductase, found in Clostridium sporogenes (strain ATCC 7955 / DSM 767 / NBRC 16411 / NCIMB 8053 / NCTC 8594 / PA 3679).